The chain runs to 223 residues: Phosphoribosylformylglycinamidine synthase subunit PurQ (223 aa).

The Glutamine amidotransferase type-1 domain maps to 3–223 (FAVLVFPGSN…MVKSWREQHV (221 aa)). Cys85 acts as the Nucleophile in catalysis. Active-site residues include His193 and Glu195.

As to quaternary structure, part of the FGAM synthase complex composed of 1 PurL, 1 PurQ and 2 PurS subunits.

The protein resides in the cytoplasm. It carries out the reaction N(2)-formyl-N(1)-(5-phospho-beta-D-ribosyl)glycinamide + L-glutamine + ATP + H2O = 2-formamido-N(1)-(5-O-phospho-beta-D-ribosyl)acetamidine + L-glutamate + ADP + phosphate + H(+). The enzyme catalyses L-glutamine + H2O = L-glutamate + NH4(+). It participates in purine metabolism; IMP biosynthesis via de novo pathway; 5-amino-1-(5-phospho-D-ribosyl)imidazole from N(2)-formyl-N(1)-(5-phospho-D-ribosyl)glycinamide: step 1/2. In terms of biological role, part of the phosphoribosylformylglycinamidine synthase complex involved in the purines biosynthetic pathway. Catalyzes the ATP-dependent conversion of formylglycinamide ribonucleotide (FGAR) and glutamine to yield formylglycinamidine ribonucleotide (FGAM) and glutamate. The FGAM synthase complex is composed of three subunits. PurQ produces an ammonia molecule by converting glutamine to glutamate. PurL transfers the ammonia molecule to FGAR to form FGAM in an ATP-dependent manner. PurS interacts with PurQ and PurL and is thought to assist in the transfer of the ammonia molecule from PurQ to PurL. The protein is Phosphoribosylformylglycinamidine synthase subunit PurQ of Staphylococcus aureus (strain MSSA476).